The sequence spans 83 residues: Putative potassium channel toxin Ts20 (83 aa).

Positions 1–18 (MKLDIVLIMFVTFSTTLA) are cleaved as a signal peptide.

Post-translationally, contains 3 disulfide bonds. Expressed by the venom gland.

Its subcellular location is the secreted. In terms of biological role, reversibly inhibits potassium channels. The sequence is that of Putative potassium channel toxin Ts20 from Tityus serrulatus (Brazilian scorpion).